The sequence spans 162 residues: NADH-quinone oxidoreductase subunit I (162 aa).

2 4Fe-4S ferredoxin-type domains span residues 52–82 (LRRY…IEAG) and 93–122 (VRYD…EGPN). Residues Cys62, Cys65, Cys68, Cys72, Cys102, Cys105, Cys108, and Cys112 each contribute to the [4Fe-4S] cluster site.

Belongs to the complex I 23 kDa subunit family. NDH-1 is composed of 14 different subunits. Subunits NuoA, H, J, K, L, M, N constitute the membrane sector of the complex. It depends on [4Fe-4S] cluster as a cofactor.

The protein localises to the cell inner membrane. It carries out the reaction a quinone + NADH + 5 H(+)(in) = a quinol + NAD(+) + 4 H(+)(out). Its function is as follows. NDH-1 shuttles electrons from NADH, via FMN and iron-sulfur (Fe-S) centers, to quinones in the respiratory chain. The immediate electron acceptor for the enzyme in this species is believed to be ubiquinone. Couples the redox reaction to proton translocation (for every two electrons transferred, four hydrogen ions are translocated across the cytoplasmic membrane), and thus conserves the redox energy in a proton gradient. The sequence is that of NADH-quinone oxidoreductase subunit I from Bradyrhizobium sp. (strain BTAi1 / ATCC BAA-1182).